The primary structure comprises 1316 residues: Tetratricopeptide repeat protein 21B (1316 aa).

TPR repeat units lie at residues 108–141 (EKAL…SDGS), 145–178 (HVLK…GNDT), 180–211 (ALLG…FPSF), 285–323 (AQLF…NPQQ), 324–357 (SEFA…DETS), 492–525 (LQTV…NPSY), 563–596 (PLYH…PGMK), 617–650 (LSIF…FSGT), 722–755 (PRSF…NPKD), 757–789 (TLAS…GQKN), 791–822 (LCYD…EPVN), 831–864 (GRCQ…QARV), 884–917 (AEIC…CETD), 919–951 (KIML…DQDN), 952–985 (EAAT…KPDN), 1023–1056 (PGFQ…RDWG), 1197–1230 (EKSW…NRSC), 1232–1264 (KAYE…SNRT), and 1266–1299 (PAVG…HPTY).

It belongs to the TTC21 family. Component of the IFT complex A (IFT-A) complex. IFT-A complex is divided into a core subcomplex composed of IFT122:IFT140:WDR19 which is associated with TULP3 and a peripheral subcomplex composed of IFT43:WDR35:TTC21B. Interacts directy with WDR35 and TTC21B. Interacts with TTC25.

It is found in the cytoplasm. The protein resides in the cytoskeleton. Its subcellular location is the cilium axoneme. In terms of biological role, component of the IFT complex A (IFT-A), a complex required for retrograde ciliary transport and entry into cilia of G protein-coupled receptors (GPCRs). Essential for retrograde trafficking of IFT-1, IFT-B and GPCRs. Negatively modulates the SHH signal transduction. In Homo sapiens (Human), this protein is Tetratricopeptide repeat protein 21B.